The primary structure comprises 572 residues: Probable terpene synthase 11 (572 aa).

Mg(2+)-binding residues include D317, D321, and E469. Residues 317 to 321 carry the DDXXD motif motif; it reads DDIFD.

Belongs to the terpene synthase family. Mg(2+) is required as a cofactor.

Its function is as follows. Probable sesquiterpene synthase. The sequence is that of Probable terpene synthase 11 (TPS11) from Ricinus communis (Castor bean).